Consider the following 459-residue polypeptide: Cysteine--tRNA ligase (459 aa).

Cysteine 28 lines the Zn(2+) pocket. The short motif at 30–40 (ITIYDLCHIGH) is the 'HIGH' region element. The Zn(2+) site is built by cysteine 209, histidine 234, and glutamate 238. The short motif at 266–270 (KMSKS) is the 'KMSKS' region element. Lysine 269 contributes to the ATP binding site.

This sequence belongs to the class-I aminoacyl-tRNA synthetase family. In terms of assembly, monomer. It depends on Zn(2+) as a cofactor.

It localises to the cytoplasm. The enzyme catalyses tRNA(Cys) + L-cysteine + ATP = L-cysteinyl-tRNA(Cys) + AMP + diphosphate. In Shewanella woodyi (strain ATCC 51908 / MS32), this protein is Cysteine--tRNA ligase.